Here is a 156-residue protein sequence, read N- to C-terminus: Small ribosomal subunit protein uS7c (156 aa).

The protein belongs to the universal ribosomal protein uS7 family. Part of the 30S ribosomal subunit.

The protein resides in the plastid. The protein localises to the chloroplast. Its function is as follows. One of the primary rRNA binding proteins, it binds directly to 16S rRNA where it nucleates assembly of the head domain of the 30S subunit. The protein is Small ribosomal subunit protein uS7c (rps7) of Nephroselmis olivacea (Green alga).